The chain runs to 117 residues: MATKTSNFVSLRVSLFILLLFISSQVAIADAKHLQQLRRKLQIVRRSRSQRGRQYNPPTLRVPPPPPPPLPQMPSAATPPPMPQLSPLQPKMHVSSLQPQMLYPPPSLPYASSPTST.

Positions 1–31 are cleaved as a signal peptide; sequence MATKTSNFVSLRVSLFILLLFISSQVAIADA. The short motif at 41–55 is the SCOOP motif element; sequence LQIVRRSRSQRGRQY. Residues 42-51 are compositionally biased toward basic residues; sequence QIVRRSRSQR. Positions 42-117 are disordered; it reads QIVRRSRSQR…LPYASSPTST (76 aa). The SxS motif essential for MIK2 binding motif lies at 47 to 49; it reads SRS. Residues 60 to 84 are compositionally biased toward pro residues; sequence LRVPPPPPPPLPQMPSAATPPPMPQ.

Interacts with MIK2 (via extracellular leucine-rich repeat domain); this interaction triggers the formation of complex between MIK2 and the BAK1/SERK3 and SERK4 coreceptors, and subsequent BAK1 activation by phosphorylation.

The protein localises to the cell membrane. The protein resides in the secreted. It localises to the extracellular space. It is found in the apoplast. Brassicaceae-specific phytocytokine (plant endogenous peptide released into the apoplast) perceived by MIK2 in a BAK1/SERK3 and SERK4 coreceptors-dependent manner, that modulates various physiological and antimicrobial processes including growth prevention and reactive oxygen species (ROS) response regulation. The chain is Serine rich endogenous peptide 5 from Arabidopsis thaliana (Mouse-ear cress).